The chain runs to 161 residues: 2-C-methyl-D-erythritol 2,4-cyclodiphosphate synthase (161 aa).

Residues Asp-11 and His-13 each coordinate a divalent metal cation. 4-CDP-2-C-methyl-D-erythritol 2-phosphate is bound by residues 11–13 and 37–38; these read DIH and HS. An a divalent metal cation-binding site is contributed by His-45. Residues 59-61, 135-138, and Arg-145 each bind 4-CDP-2-C-methyl-D-erythritol 2-phosphate; these read DIG and TTNE.

This sequence belongs to the IspF family. In terms of assembly, homotrimer. A divalent metal cation serves as cofactor.

It carries out the reaction 4-CDP-2-C-methyl-D-erythritol 2-phosphate = 2-C-methyl-D-erythritol 2,4-cyclic diphosphate + CMP. The protein operates within isoprenoid biosynthesis; isopentenyl diphosphate biosynthesis via DXP pathway; isopentenyl diphosphate from 1-deoxy-D-xylulose 5-phosphate: step 4/6. In terms of biological role, involved in the biosynthesis of isopentenyl diphosphate (IPP) and dimethylallyl diphosphate (DMAPP), two major building blocks of isoprenoid compounds. Catalyzes the conversion of 4-diphosphocytidyl-2-C-methyl-D-erythritol 2-phosphate (CDP-ME2P) to 2-C-methyl-D-erythritol 2,4-cyclodiphosphate (ME-CPP) with a corresponding release of cytidine 5-monophosphate (CMP). This chain is 2-C-methyl-D-erythritol 2,4-cyclodiphosphate synthase, found in Synechocystis sp. (strain ATCC 27184 / PCC 6803 / Kazusa).